Consider the following 552-residue polypeptide: Protein FAM234A (552 aa).

The span at M1–Q22 shows a compositional bias: basic and acidic residues. A disordered region spans residues M1–P40. Residues M1–A49 are Cytoplasmic-facing. S21 carries the phosphoserine modification. The chain crosses the membrane as a helical; Signal-anchor for type II membrane protein span at residues A50–I70. Over P71–A552 the chain is Extracellular. 4 N-linked (GlcNAc...) asparagine glycosylation sites follow: N116, N314, N389, and N473.

It belongs to the FAM234 family.

It localises to the membrane. In Homo sapiens (Human), this protein is Protein FAM234A.